Here is a 312-residue protein sequence, read N- to C-terminus: Ribosomal RNA small subunit methyltransferase H (312 aa).

Residues 33-35, Asp53, Phe79, Asp100, and Gln107 contribute to the S-adenosyl-L-methionine site; that span reads AGH.

The protein belongs to the methyltransferase superfamily. RsmH family.

The protein localises to the cytoplasm. It catalyses the reaction cytidine(1402) in 16S rRNA + S-adenosyl-L-methionine = N(4)-methylcytidine(1402) in 16S rRNA + S-adenosyl-L-homocysteine + H(+). Specifically methylates the N4 position of cytidine in position 1402 (C1402) of 16S rRNA. The sequence is that of Ribosomal RNA small subunit methyltransferase H from Clostridium acetobutylicum (strain ATCC 824 / DSM 792 / JCM 1419 / IAM 19013 / LMG 5710 / NBRC 13948 / NRRL B-527 / VKM B-1787 / 2291 / W).